A 225-amino-acid polypeptide reads, in one-letter code: PKHD-type hydroxylase YbiX (225 aa).

The region spanning 78–177 (TLSTPLFNRY…RVASFMWIQS (100 aa)) is the Fe2OG dioxygenase domain. Residues His-96, Asp-98, and His-158 each coordinate Fe cation. Arg-168 lines the 2-oxoglutarate pocket.

The cofactor is Fe(2+). L-ascorbate serves as cofactor.

The chain is PKHD-type hydroxylase YbiX from Escherichia coli O17:K52:H18 (strain UMN026 / ExPEC).